The sequence spans 118 residues: Large ribosomal subunit protein bL19 (118 aa).

This sequence belongs to the bacterial ribosomal protein bL19 family.

Its function is as follows. This protein is located at the 30S-50S ribosomal subunit interface and may play a role in the structure and function of the aminoacyl-tRNA binding site. In Campylobacter jejuni subsp. doylei (strain ATCC BAA-1458 / RM4099 / 269.97), this protein is Large ribosomal subunit protein bL19.